A 297-amino-acid polypeptide reads, in one-letter code: Acetaldehyde dehydrogenase (297 aa).

NAD(+) is bound at residue 15–18 (SGSI). The Acyl-thioester intermediate role is filled by C130. Residues 162–170 (SAGIATREN) and N272 each bind NAD(+).

It belongs to the acetaldehyde dehydrogenase family.

The catalysed reaction is acetaldehyde + NAD(+) + CoA = acetyl-CoA + NADH + H(+). The sequence is that of Acetaldehyde dehydrogenase (mhpF) from Burkholderia pseudomallei (strain K96243).